A 78-amino-acid polypeptide reads, in one-letter code: Defensin-like protein 149 (78 aa).

The signal sequence occupies residues 1–25 (MMKKLIQLSFTVMIIFTILVLGVVA). Disulfide bonds link C36–C77, C45–C65, C50–C71, and C54–C73.

Belongs to the DEFL family.

It localises to the secreted. The chain is Defensin-like protein 149 (LCR5) from Arabidopsis thaliana (Mouse-ear cress).